We begin with the raw amino-acid sequence, 248 residues long: PF03932 family protein CutC (248 aa).

This sequence belongs to the CutC family.

Its subcellular location is the cytoplasm. The chain is PF03932 family protein CutC from Citrobacter koseri (strain ATCC BAA-895 / CDC 4225-83 / SGSC4696).